The sequence spans 198 residues: uncharacterized protein (198 aa).

The disordered stretch occupies residues 72–95 (ESEEQYDSDDDNDKLVLNDDEDDE). The segment covering 75–94 (EQYDSDDDNDKLVLNDDEDD) has biased composition (acidic residues). A coiled-coil region spans residues 106–136 (EATNITNINKNIENIKNDMSNLNNMNDSNQK).

This is an uncharacterized protein from Plasmodium falciparum (isolate 3D7).